The following is a 466-amino-acid chain: Alpha-1A adrenergic receptor (466 aa).

Residues 1 to 27 (MVFLSGNASDSSNCTHPPPPVNISKAI) are Extracellular-facing. Asn7, Asn13, and Asn22 each carry an N-linked (GlcNAc...) asparagine glycan. Residues 28–51 (LLGVILGGLILFGVLGNILVILSV) traverse the membrane as a helical segment. The Cytoplasmic segment spans residues 52–64 (ACHRHLHSVTHYY). Residues 65–88 (IVNLAVADLLLTSTVLPFSAIFEI) traverse the membrane as a helical segment. Residues 89 to 99 (LGYWAFGRVFC) lie on the Extracellular side of the membrane. Cys99 and Cys176 are oxidised to a cystine. Residues 100–122 (NVWAAVDVLCCTASIMGLCIISI) traverse the membrane as a helical segment. The Cytoplasmic segment spans residues 123–143 (DRYIGVSYPLRYPTIVTQKRG). The helical transmembrane segment at 144–167 (LMALLCVWALSLVISIGPLFGWRQ) threads the bilayer. Residues 168–181 (PAPEDETICQINEE) lie on the Extracellular side of the membrane. Residues 182-205 (PGYVLFSALGSFYVPLTIILVMYC) form a helical membrane-spanning segment. Over 206-273 (RVYVVAKRES…FSREKKAAKT (68 aa)) the chain is Cytoplasmic. Ser215 is subject to Phosphoserine; by PKA. A helical membrane pass occupies residues 274-297 (LGIVVGCFVLCWLPFFLVMPIGSF). Residues 298-305 (FPDFRPSE) are Extracellular-facing. A helical membrane pass occupies residues 306–329 (TVFKIAFWLGYLNSCINPIIYPCS). The Cytoplasmic portion of the chain corresponds to 330–466 (SQEFKKAFQN…ISLSENGEEV (137 aa)). A Nuclear localization signal motif is present at residues 334 to 349 (KKAFQNVLRIQCLRRK). A lipid anchor (S-palmitoyl cysteine) is attached at Cys345.

Belongs to the G-protein coupled receptor 1 family. Adrenergic receptor subfamily. ADRA1A sub-subfamily. As to quaternary structure, homo- and heterooligomer. Heterooligomerizes with ADRA1B homooligomers in cardiac myocytes. Interacts with CAVIN4.

The protein resides in the nucleus membrane. The protein localises to the cell membrane. It is found in the cytoplasm. It localises to the membrane. Its subcellular location is the caveola. Its function is as follows. This alpha-adrenergic receptor mediates its action by association with G proteins that activate a phosphatidylinositol-calcium second messenger system. Its effect is mediated by G(q) and G(11) proteins. Nuclear ADRA1A-ADRA1B heterooligomers regulate phenylephrine (PE)-stimulated ERK signaling in cardiac myocytes. This chain is Alpha-1A adrenergic receptor (ADRA1A), found in Bos taurus (Bovine).